The following is a 258-amino-acid chain: 6-carboxyhexanoate--CoA ligase (258 aa).

This sequence belongs to the BioW family. Homodimer. Mg(2+) is required as a cofactor.

It carries out the reaction heptanedioate + ATP + CoA = 6-carboxyhexanoyl-CoA + AMP + diphosphate. Its pathway is metabolic intermediate metabolism; pimeloyl-CoA biosynthesis; pimeloyl-CoA from pimelate: step 1/1. Catalyzes the transformation of pimelate into pimeloyl-CoA with concomitant hydrolysis of ATP to AMP. This Bacillus atrophaeus (strain 1942) protein is 6-carboxyhexanoate--CoA ligase.